We begin with the raw amino-acid sequence, 293 residues long: Formamidopyrimidine-DNA glycosylase (293 aa).

Residue P2 is the Schiff-base intermediate with DNA of the active site. Residue E3 is the Proton donor of the active site. The active-site Proton donor; for beta-elimination activity is the K58. H104, R123, and K166 together coordinate DNA. An FPG-type zinc finger spans residues 257 to 293 (KVYDREGETCKTPACGGTIKRFTQNGRSTFWCPKCQK). The Proton donor; for delta-elimination activity role is filled by R283.

It belongs to the FPG family. As to quaternary structure, monomer. Zn(2+) serves as cofactor.

The catalysed reaction is Hydrolysis of DNA containing ring-opened 7-methylguanine residues, releasing 2,6-diamino-4-hydroxy-5-(N-methyl)formamidopyrimidine.. The enzyme catalyses 2'-deoxyribonucleotide-(2'-deoxyribose 5'-phosphate)-2'-deoxyribonucleotide-DNA = a 3'-end 2'-deoxyribonucleotide-(2,3-dehydro-2,3-deoxyribose 5'-phosphate)-DNA + a 5'-end 5'-phospho-2'-deoxyribonucleoside-DNA + H(+). Its function is as follows. Involved in base excision repair of DNA damaged by oxidation or by mutagenic agents. Acts as a DNA glycosylase that recognizes and removes damaged bases. Has a preference for oxidized purines, such as 7,8-dihydro-8-oxoguanine (8-oxoG). Has AP (apurinic/apyrimidinic) lyase activity and introduces nicks in the DNA strand. Cleaves the DNA backbone by beta-delta elimination to generate a single-strand break at the site of the removed base with both 3'- and 5'-phosphates. The polypeptide is Formamidopyrimidine-DNA glycosylase (Bradyrhizobium diazoefficiens (strain JCM 10833 / BCRC 13528 / IAM 13628 / NBRC 14792 / USDA 110)).